The chain runs to 675 residues: uncharacterized protein (675 aa).

4 consecutive transmembrane segments (helical) span residues 2-22 (QHTF…DFFF), 397-417 (LFLL…VFIA), 448-468 (LLVA…LCCY), and 481-501 (IFVY…TYAA). Disordered regions lie at residues 616-635 (YSPN…DIND) and 646-675 (QRMG…ELSD). Acidic residues predominate over residues 665 to 675 (VFSESDEELSD). A Phosphoserine modification is found at serine 669.

This sequence belongs to the 1-acyl-sn-glycerol-3-phosphate acyltransferase family.

Its subcellular location is the endoplasmic reticulum membrane. This is an uncharacterized protein from Schizosaccharomyces pombe (strain 972 / ATCC 24843) (Fission yeast).